The sequence spans 24 residues: Brevinin-1JDb (24 aa).

Cysteines 18 and 24 form a disulfide.

As to expression, expressed by the skin glands.

Its subcellular location is the secreted. Has antibacterial activity against E.coli and S.aureus strains. Has antifungal activity against C.albicans. Has hemolytic activity against rabbit erythrocytes. The chain is Brevinin-1JDb from Odorrana jingdongensis (Jingdong frog).